The sequence spans 337 residues: Glutaredoxin-3 (337 aa).

At A2 the chain carries N-acetylalanine. Residues 2–119 form the Thioredoxin domain; sequence AAGAAEAGEA…LTKKVQRHVS (118 aa). Phosphoserine is present on S119. 2 consecutive Glutaredoxin domains span residues 144–238 and 239–337; these read HAAP…PKLE and ERLK…KGEN. 2 residues coordinate [2Fe-2S] cluster: C161 and C263.

In terms of assembly, homodimer; the homodimer is independent of 2Fe-2S clusters. Heterotrimer; forms a heterotrimeric complex composed by two BOLA2 molecules and one GLRX3 molecule; linked by [2Fe-2S] clusters. Interacts (via N-terminus) with PRKCQ/PKC-theta. Interacts (via C-terminus) with CSRP3. Interacts with CSRP2.

The protein localises to the cytoplasm. The protein resides in the cytosol. It localises to the cell cortex. It is found in the myofibril. Its subcellular location is the sarcomere. The protein localises to the z line. In terms of biological role, together with BOLA2, acts as a cytosolic iron-sulfur (Fe-S) cluster assembly factor that facilitates [2Fe-2S] cluster insertion into a subset of cytosolic proteins. Acts as a critical negative regulator of cardiac hypertrophy and a positive inotropic regulator. Required for hemoglobin maturation. Does not possess any thyoredoxin activity since it lacks the conserved motif that is essential for catalytic activity. This is Glutaredoxin-3 (Glrx3) from Mus musculus (Mouse).